A 208-amino-acid chain; its full sequence is Large ribosomal subunit protein bL25 (208 aa).

It belongs to the bacterial ribosomal protein bL25 family. CTC subfamily. Part of the 50S ribosomal subunit; part of the 5S rRNA/L5/L18/L25 subcomplex. Contacts the 5S rRNA. Binds to the 5S rRNA independently of L5 and L18.

Functionally, this is one of the proteins that binds to the 5S RNA in the ribosome where it forms part of the central protuberance. This chain is Large ribosomal subunit protein bL25, found in Burkholderia pseudomallei (strain K96243).